A 268-amino-acid polypeptide reads, in one-letter code: Small ribosomal subunit protein uS2 (268 aa).

Residues 233–268 (SVREEEFAEAAAEGEEKPARRAPAKKAAKKGDDAQA) form a disordered region.

It belongs to the universal ribosomal protein uS2 family.

The chain is Small ribosomal subunit protein uS2 from Stenotrophomonas maltophilia (strain K279a).